A 425-amino-acid chain; its full sequence is Argininosuccinate synthase (425 aa).

Residues 7 to 15 and Ala33 contribute to the ATP site; that span reads AYSGGLDTS. Residue Tyr84 coordinates L-citrulline. Residue Gly114 participates in ATP binding. Residues Thr116, Asn120, and Asp121 each coordinate L-aspartate. Residue Asn120 coordinates L-citrulline. Positions 124, 177, 186, 267, and 279 each coordinate L-citrulline.

Belongs to the argininosuccinate synthase family. Type 1 subfamily. Homotetramer.

The protein localises to the cytoplasm. It carries out the reaction L-citrulline + L-aspartate + ATP = 2-(N(omega)-L-arginino)succinate + AMP + diphosphate + H(+). The protein operates within amino-acid biosynthesis; L-arginine biosynthesis; L-arginine from L-ornithine and carbamoyl phosphate: step 2/3. The protein is Argininosuccinate synthase of Pseudothermotoga lettingae (strain ATCC BAA-301 / DSM 14385 / NBRC 107922 / TMO) (Thermotoga lettingae).